Consider the following 261-residue polypeptide: Chloroplastic import inner membrane translocase subunit HP30-1 (261 aa).

Helical transmembrane passes span 59–77, 113–129, 139–155, and 163–180; these read AAVV…GGLM, NFAA…SVMK, SAVV…SLVS, and MNAI…GVFF.

It belongs to the Tim17/Tim22/Tim23 family. Probable component of a protein-conducting channel made of HP30-1, HP30-2 and HP20 that mediates the import of transit sequence-less proteins into the chloroplastic inner membrane. Interacts with CEQORH.

The protein localises to the plastid. Its subcellular location is the chloroplast inner membrane. In terms of biological role, together with HP30-2 and HP20, triggers the import and insertion of transit sequence-less multi-pass transmembrane proteins (e.g. CEQORH) into the chloroplastic inner membrane. The polypeptide is Chloroplastic import inner membrane translocase subunit HP30-1 (Arabidopsis thaliana (Mouse-ear cress)).